Reading from the N-terminus, the 304-residue chain is Bifunctional protein FolD (304 aa).

NADP(+) contacts are provided by residues 167 to 169 (GRS), Ser192, and Ile233.

The protein belongs to the tetrahydrofolate dehydrogenase/cyclohydrolase family. In terms of assembly, homodimer.

It catalyses the reaction (6R)-5,10-methylene-5,6,7,8-tetrahydrofolate + NADP(+) = (6R)-5,10-methenyltetrahydrofolate + NADPH. The catalysed reaction is (6R)-5,10-methenyltetrahydrofolate + H2O = (6R)-10-formyltetrahydrofolate + H(+). It functions in the pathway one-carbon metabolism; tetrahydrofolate interconversion. In terms of biological role, catalyzes the oxidation of 5,10-methylenetetrahydrofolate to 5,10-methenyltetrahydrofolate and then the hydrolysis of 5,10-methenyltetrahydrofolate to 10-formyltetrahydrofolate. This Rhodospirillum centenum (strain ATCC 51521 / SW) protein is Bifunctional protein FolD.